A 992-amino-acid polypeptide reads, in one-letter code: Aminopeptidase Q (992 aa).

Residues Gly2 to Arg13 lie on the Cytoplasmic side of the membrane. A helical; Signal-anchor for type II membrane protein transmembrane segment spans residues Ala14 to Ala34. Over Ala35–Thr992 the chain is Extracellular. The segment at Asp47 to Gly92 is disordered. A glycan (N-linked (GlcNAc...) asparagine) is linked at Asn133. Glu241 contacts substrate. N-linked (GlcNAc...) asparagine glycans are attached at residues Asn262, Asn289, Asn347, and Asn361. Position 380 to 384 (Ser380 to Asn384) interacts with substrate. His416 provides a ligand contact to Zn(2+). The active-site Proton acceptor is the Glu417. Positions 420 and 439 each coordinate Zn(2+). Tyr505 functions as the Proton donor in the catalytic mechanism. Asn555, Asn584, Asn602, Asn609, Asn655, Asn811, Asn850, and Asn889 each carry an N-linked (GlcNAc...) asparagine glycan.

Belongs to the peptidase M1 family. Requires Zn(2+) as cofactor. In terms of tissue distribution, expressed in skin. Expression levels do not differ between dark and light skin areas.

The protein resides in the membrane. Functionally, metalloprotease which may be important for placentation by regulating biological activity of key peptides at the embryo-maternal interface. Involved in coat pigmentation patterns. During skin development, may be required to establish the periodicity of tabby markings, initiating a pre-pattern at or before hair follicle development. In Felis catus (Cat), this protein is Aminopeptidase Q (LVRN).